A 407-amino-acid polypeptide reads, in one-letter code: Histone acetyltransferase mst2 (407 aa).

The MYST-type HAT domain occupies 98–372; the sequence is PQPTSIRYLY…VNPKLLRWTP (275 aa). Residues 131–156 form a C2HC MYST-type zinc finger; that stretch reads LYICESCLKYMNSDHVLQRHKMKCSW. An N6-acetyllysine; by autocatalysis modification is found at Lys-198. Acetyl-CoA contacts are provided by residues 241 to 243, Thr-243, and 248 to 254; these read ILT and QRRGYGV. Glu-274 serves as the catalytic Proton donor/acceptor. Positions 278 and 287 each coordinate acetyl-CoA.

This sequence belongs to the MYST (SAS/MOZ) family. As to quaternary structure, component of the mst2 complex composed of at least eaf6, mst2, nto1, pdp3, ptf1, ptf2 and tfg3. Post-translationally, autoacetylation at Lys-198 is required for proper function.

It is found in the cytoplasm. Its subcellular location is the nucleus. It catalyses the reaction L-lysyl-[protein] + acetyl-CoA = N(6)-acetyl-L-lysyl-[protein] + CoA + H(+). In terms of biological role, component of the mst2 complex which is a highly specific H3 lysine 14 (H3K14) acetyltransferase that functions together with gcn5 to regulate global levels of H3K14 acetylation (H3K14ac), critical for DNA damage checkpoint activation. Negatively regulates telomere silencing. Telomere silencing is increased due to histone hypoacetylation and/or an increase in the ratio of methylated histones to acetylated histones. Telomeric histone acetylation contributes to normal meiotic progression. The sequence is that of Histone acetyltransferase mst2 (mst2) from Schizosaccharomyces pombe (strain 972 / ATCC 24843) (Fission yeast).